We begin with the raw amino-acid sequence, 497 residues long: Vacuolar-processing enzyme beta-isozyme 1 (497 aa).

Positions 1–23 (MAARCWVWGFVVALLAVAAAADG) are cleaved as a signal peptide. A glycan (N-linked (GlcNAc...) asparagine) is linked at N153. The active site involves H180. The active-site Nucleophile is C222. The cysteines at positions 255 and 269 are disulfide-linked. N340 carries an N-linked (GlcNAc...) asparagine glycan. Intrachain disulfides connect C432/C462 and C444/C479.

It belongs to the peptidase C13 family. In terms of processing, auto-catalytic activation.

The protein localises to the protein storage vacuole. The enzyme catalyses Hydrolysis of proteins and small molecule substrates at -Asn-|-Xaa- bonds.. Its function is as follows. Asparagine-specific endopeptidase that may be involved in processing of proteins targeted to vacuoles. Cysteine protease required for post-translational proteolysis of seed storage proteins in the protein storage vacuole (PSV) of developing seeds, by processing of proglutelin precursor to mature glutelin subunits, thus contributing to the formation of protein crystalline structures in PSV. This is Vacuolar-processing enzyme beta-isozyme 1 from Oryza sativa subsp. indica (Rice).